Reading from the N-terminus, the 244-residue chain is INO80 complex subunit E (244 aa).

A coiled-coil region spans residues 10-54; sequence DYKKKYRNLKRKLKFLIYEHECFQEELRKAQRKLLKVSRDKSFLL. Positions 63–236 are disordered; sequence VDEDSSDSDA…SGDDALDGDD (174 aa). Low complexity predominate over residues 99-115; that stretch reads PPLGGAPSPSSLSLPPS. Residues 157–171 show a composition bias toward basic residues; it reads RPKREKRPRLPRKLK. Glycyl lysine isopeptide (Lys-Gly) (interchain with G-Cter in SUMO2) cross-links involve residues Lys-159 and Lys-171. The span at 202-212 shows a compositional bias: pro residues; it reads PLPPPKMPPPT.

Component of the chromatin remodeling INO80 complex; specifically part of a complex module associated with the N-terminus of INO80.

Its subcellular location is the nucleus. Functionally, putative regulatory component of the chromatin remodeling INO80 complex which is involved in transcriptional regulation, DNA replication and probably DNA repair. The protein is INO80 complex subunit E (INO80E) of Homo sapiens (Human).